The following is a 207-amino-acid chain: Guanylate kinase (207 aa).

Residues 6–185 enclose the Guanylate kinase-like domain; sequence GLLIVLSGPS…AKNRIQCIVE (180 aa). 13-20 provides a ligand contact to ATP; that stretch reads GPSGVGKG.

The protein belongs to the guanylate kinase family.

It localises to the cytoplasm. It carries out the reaction GMP + ATP = GDP + ADP. In terms of biological role, essential for recycling GMP and indirectly, cGMP. The chain is Guanylate kinase from Staphylococcus aureus (strain Mu50 / ATCC 700699).